The primary structure comprises 880 residues: Tyrosine-protein kinase receptor TYRO3 (880 aa).

The N-terminal stretch at 1 to 30 (MALRRSMGRPGLRPLLLAGLASLLLPGSAA) is a signal peptide. Ig-like C2-type domains lie at 31–118 (AGLK…TKIS) and 129–210 (PFFT…AIIR). Residues 31–419 (AGLKLMGAPV…QGPPHSRTSW (389 aa)) are Extracellular-facing. Residues Asn-53, Asn-75, Asn-181, Asn-220, Asn-230, Asn-283, Asn-356, and Asn-370 are each glycosylated (N-linked (GlcNAc...) asparagine). Disulfide bonds link Cys-54-Cys-107 and Cys-150-Cys-193. 2 consecutive Fibronectin type-III domains span residues 217–310 (APFN…TKGL) and 315–406 (APQN…SHDH). The chain crosses the membrane as a helical span at residues 420–440 (VPVVLGVLTALITAAALALIL). At 441-880 (LRKRRKETRF…QQGLLPHSSC (440 aa)) the chain is on the cytoplasmic side. Ser-456 carries the post-translational modification Phosphoserine. The Protein kinase domain occupies 508–785 (FTLGRMLGKG…LENILGHLSV (278 aa)). Residues 514–522 (LGKGEFGSV) and Lys-540 contribute to the ATP site. The active-site Proton acceptor is the Asp-645. Phosphotyrosine; by autocatalysis is present on residues Tyr-671, Tyr-675, Tyr-676, and Tyr-794. 2 disordered regions span residues 804–827 (AENG…GSGM) and 842–864 (SPGG…LNEN). Ser-808 and Ser-859 each carry phosphoserine. Over residues 852–864 (QLEQQPESPLNEN) the composition is skewed to polar residues.

This sequence belongs to the protein kinase superfamily. Tyr protein kinase family. AXL/UFO subfamily. In terms of assembly, monomer and homodimer. Interacts (via N-terminus) with extracellular ligands TULP1 and GAS6. Interacts with PIK3R1; this interaction increases PI3-kinase activity. Autophosphorylated. As to expression, abundant in the brain and lower levels in other tissues.

It is found in the cell membrane. It carries out the reaction L-tyrosyl-[protein] + ATP = O-phospho-L-tyrosyl-[protein] + ADP + H(+). Functionally, receptor tyrosine kinase that transduces signals from the extracellular matrix into the cytoplasm by binding to several ligands including TULP1 or GAS6. Regulates many physiological processes including cell survival, migration and differentiation. Ligand binding at the cell surface induces dimerization and autophosphorylation of TYRO3 on its intracellular domain that provides docking sites for downstream signaling molecules. Following activation by ligand, interacts with PIK3R1 and thereby enhances PI3-kinase activity. Activates the AKT survival pathway, including nuclear translocation of NF-kappa-B and up-regulation of transcription of NF-kappa-B-regulated genes. TYRO3 signaling plays a role in various processes such as neuron protection from excitotoxic injury, platelet aggregation and cytoskeleton reorganization. Also plays an important role in inhibition of Toll-like receptors (TLRs)-mediated innate immune response by activating STAT1, which selectively induces production of suppressors of cytokine signaling SOCS1 and SOCS3. In Rattus norvegicus (Rat), this protein is Tyrosine-protein kinase receptor TYRO3 (Tyro3).